The sequence spans 879 residues: Protein translocase subunit SecA (879 aa).

ATP-binding positions include Gln86, 104 to 108, and Asp500; that span reads GEGKT. Positions 863, 865, 874, and 875 each coordinate Zn(2+).

It belongs to the SecA family. Monomer and homodimer. Part of the essential Sec protein translocation apparatus which comprises SecA, SecYEG and auxiliary proteins SecDF-YajC and YidC. The cofactor is Zn(2+).

Its subcellular location is the cell inner membrane. It localises to the cytoplasm. It carries out the reaction ATP + H2O + cellular proteinSide 1 = ADP + phosphate + cellular proteinSide 2.. Functionally, part of the Sec protein translocase complex. Interacts with the SecYEG preprotein conducting channel. Has a central role in coupling the hydrolysis of ATP to the transfer of proteins into and across the cell membrane, serving both as a receptor for the preprotein-SecB complex and as an ATP-driven molecular motor driving the stepwise translocation of polypeptide chains across the membrane. The sequence is that of Protein translocase subunit SecA from Orientia tsutsugamushi (strain Ikeda) (Rickettsia tsutsugamushi).